Here is a 58-residue protein sequence, read N- to C-terminus: Large ribosomal subunit protein bL32 (58 aa).

Belongs to the bacterial ribosomal protein bL32 family.

The polypeptide is Large ribosomal subunit protein bL32 (Prochlorococcus marinus (strain MIT 9303)).